The chain runs to 658 residues: DNA mismatch repair protein MutL (658 aa).

The segment covering 114 to 130 has biased composition (basic and acidic residues); the sequence is RQEDSSHATQVKAEDGK. Disordered regions lie at residues 114-138 and 353-405; these read RQED…TAAA and PMPS…HSLS. Residues 361–372 show a composition bias toward polar residues; it reads ENLFDSASNHPT.

The protein belongs to the DNA mismatch repair MutL/HexB family.

In terms of biological role, this protein is involved in the repair of mismatches in DNA. It is required for dam-dependent methyl-directed DNA mismatch repair. May act as a 'molecular matchmaker', a protein that promotes the formation of a stable complex between two or more DNA-binding proteins in an ATP-dependent manner without itself being part of a final effector complex. The chain is DNA mismatch repair protein MutL from Neisseria gonorrhoeae (strain NCCP11945).